The following is a 95-amino-acid chain: Aspartyl/glutamyl-tRNA(Asn/Gln) amidotransferase subunit C (95 aa).

Belongs to the GatC family. In terms of assembly, heterotrimer of A, B and C subunits.

It catalyses the reaction L-glutamyl-tRNA(Gln) + L-glutamine + ATP + H2O = L-glutaminyl-tRNA(Gln) + L-glutamate + ADP + phosphate + H(+). The enzyme catalyses L-aspartyl-tRNA(Asn) + L-glutamine + ATP + H2O = L-asparaginyl-tRNA(Asn) + L-glutamate + ADP + phosphate + 2 H(+). In terms of biological role, allows the formation of correctly charged Asn-tRNA(Asn) or Gln-tRNA(Gln) through the transamidation of misacylated Asp-tRNA(Asn) or Glu-tRNA(Gln) in organisms which lack either or both of asparaginyl-tRNA or glutaminyl-tRNA synthetases. The reaction takes place in the presence of glutamine and ATP through an activated phospho-Asp-tRNA(Asn) or phospho-Glu-tRNA(Gln). This Pseudomonas entomophila (strain L48) protein is Aspartyl/glutamyl-tRNA(Asn/Gln) amidotransferase subunit C.